The chain runs to 350 residues: tRNA uridine(34) hydroxylase (350 aa).

Positions 146 to 240 (DDPDALFIDM…YARKAREQGL (95 aa)) constitute a Rhodanese domain. The active-site Cysteine persulfide intermediate is the C200.

This sequence belongs to the TrhO family.

The catalysed reaction is uridine(34) in tRNA + AH2 + O2 = 5-hydroxyuridine(34) in tRNA + A + H2O. Its function is as follows. Catalyzes oxygen-dependent 5-hydroxyuridine (ho5U) modification at position 34 in tRNAs, the first step in 5-carboxymethoxyuridine (cmo5U) biosynthesis. May be part of an alternate pathway, which is able to bypass cmo5U biogenesis in a subset of tRNAs under aerobic conditions. The chain is tRNA uridine(34) hydroxylase from Escherichia coli O9:H4 (strain HS).